A 169-amino-acid chain; its full sequence is ATP synthase subunit b (169 aa).

The chain crosses the membrane as a helical span at residues 26-46 (FFFVLLIFLIVLGVIAKWVVP).

This sequence belongs to the ATPase B chain family. In terms of assembly, F-type ATPases have 2 components, F(1) - the catalytic core - and F(0) - the membrane proton channel. F(1) has five subunits: alpha(3), beta(3), gamma(1), delta(1), epsilon(1). F(0) has three main subunits: a(1), b(2) and c(10-14). The alpha and beta chains form an alternating ring which encloses part of the gamma chain. F(1) is attached to F(0) by a central stalk formed by the gamma and epsilon chains, while a peripheral stalk is formed by the delta and b chains.

The protein localises to the cell membrane. F(1)F(0) ATP synthase produces ATP from ADP in the presence of a proton or sodium gradient. F-type ATPases consist of two structural domains, F(1) containing the extramembraneous catalytic core and F(0) containing the membrane proton channel, linked together by a central stalk and a peripheral stalk. During catalysis, ATP synthesis in the catalytic domain of F(1) is coupled via a rotary mechanism of the central stalk subunits to proton translocation. Its function is as follows. Component of the F(0) channel, it forms part of the peripheral stalk, linking F(1) to F(0). The sequence is that of ATP synthase subunit b from Mycobacterium sp. (strain JLS).